The following is a 102-amino-acid chain: Small ribosomal subunit protein uS10 (102 aa).

Belongs to the universal ribosomal protein uS10 family. Part of the 30S ribosomal subunit.

In terms of biological role, involved in the binding of tRNA to the ribosomes. In Methanosphaerula palustris (strain ATCC BAA-1556 / DSM 19958 / E1-9c), this protein is Small ribosomal subunit protein uS10.